Here is a 287-residue protein sequence, read N- to C-terminus: 4-hydroxybenzoate octaprenyltransferase (287 aa).

6 helical membrane passes run 41–61 (WPLL…GCAM), 89–109 (WEAV…ILPL), 133–153 (FFAI…PMAF), 158–178 (DTVP…SVAY), 202–224 (FGRF…YVWI), and 266–286 (HNNW…LLAG).

Belongs to the UbiA prenyltransferase family. Mg(2+) is required as a cofactor.

The protein localises to the cell inner membrane. The catalysed reaction is all-trans-octaprenyl diphosphate + 4-hydroxybenzoate = 4-hydroxy-3-(all-trans-octaprenyl)benzoate + diphosphate. The protein operates within cofactor biosynthesis; ubiquinone biosynthesis. Its function is as follows. Catalyzes the prenylation of para-hydroxybenzoate (PHB) with an all-trans polyprenyl group. Mediates the second step in the final reaction sequence of ubiquinone-8 (UQ-8) biosynthesis, which is the condensation of the polyisoprenoid side chain with PHB, generating the first membrane-bound Q intermediate 3-octaprenyl-4-hydroxybenzoate. The polypeptide is 4-hydroxybenzoate octaprenyltransferase (Burkholderia cenocepacia (strain HI2424)).